The following is a 98-amino-acid chain: Small ribosomal subunit protein bS20 (98 aa).

Basic residues predominate over residues 1–12; the sequence is MAPRKPSKKVGP. Residues 1-31 form a disordered region; it reads MAPRKPSKKVGPQKRPSAEKRVITSKKKQLR.

The protein belongs to the bacterial ribosomal protein bS20 family.

In terms of biological role, binds directly to 16S ribosomal RNA. The chain is Small ribosomal subunit protein bS20 from Chlamydia trachomatis serovar A (strain ATCC VR-571B / DSM 19440 / HAR-13).